Reading from the N-terminus, the 853-residue chain is DNA mismatch repair protein MutS (853 aa).

613–620 (GPNMGGKS) provides a ligand contact to ATP.

The protein belongs to the DNA mismatch repair MutS family.

In terms of biological role, this protein is involved in the repair of mismatches in DNA. It is possible that it carries out the mismatch recognition step. This protein has a weak ATPase activity. The polypeptide is DNA mismatch repair protein MutS (Vibrio campbellii (strain ATCC BAA-1116)).